A 598-amino-acid polypeptide reads, in one-letter code: NADH-quinone oxidoreductase subunit C/D (598 aa).

Residues 1 to 188 (MTDSTTHDAL…DPFVLTKQKE (188 aa)) are NADH dehydrogenase I subunit C. Residues 212–598 (DFMFLNLGPN…IDFVMSDVDR (387 aa)) form an NADH dehydrogenase I subunit D region.

In the N-terminal section; belongs to the complex I 30 kDa subunit family. It in the C-terminal section; belongs to the complex I 49 kDa subunit family. NDH-1 is composed of 13 different subunits. Subunits NuoB, CD, E, F, and G constitute the peripheral sector of the complex.

The protein resides in the cell inner membrane. The enzyme catalyses a quinone + NADH + 5 H(+)(in) = a quinol + NAD(+) + 4 H(+)(out). NDH-1 shuttles electrons from NADH, via FMN and iron-sulfur (Fe-S) centers, to quinones in the respiratory chain. The immediate electron acceptor for the enzyme in this species is believed to be ubiquinone. Couples the redox reaction to proton translocation (for every two electrons transferred, four hydrogen ions are translocated across the cytoplasmic membrane), and thus conserves the redox energy in a proton gradient. The polypeptide is NADH-quinone oxidoreductase subunit C/D (Serratia proteamaculans (strain 568)).